The sequence spans 538 residues: Chaperonin GroEL 2 (538 aa).

Residues 29 to 32 (TLGP), 86 to 90 (DGTTT), Gly412, 479 to 481 (NAA), and Asp495 contribute to the ATP site.

The protein belongs to the chaperonin (HSP60) family. In terms of assembly, forms a cylinder of 14 subunits composed of two heptameric rings stacked back-to-back. Interacts with the co-chaperonin GroES.

The protein localises to the cytoplasm. The catalysed reaction is ATP + H2O + a folded polypeptide = ADP + phosphate + an unfolded polypeptide.. Its function is as follows. Together with its co-chaperonin GroES, plays an essential role in assisting protein folding. The GroEL-GroES system forms a nano-cage that allows encapsulation of the non-native substrate proteins and provides a physical environment optimized to promote and accelerate protein folding. The sequence is that of Chaperonin GroEL 2 from Renibacterium salmoninarum (strain ATCC 33209 / DSM 20767 / JCM 11484 / NBRC 15589 / NCIMB 2235).